Consider the following 426-residue polypeptide: CAAX prenyl protease 1 homolog (426 aa).

The Lumenal segment spans residues 1-3 (MVN). Residues 4–24 (YFIISISFFLLEHFYSFYLNF) form a helical membrane-spanning segment. The Cytoplasmic segment spans residues 25 to 70 (RQSKLLKNLTKVPEYCKDRITQEDFKKSQEYSKAKLDYKTLTSTIQ). A helical membrane pass occupies residues 71–91 (VLTTLLSFYYPVYPYFWNLSL). The Lumenal portion of the chain corresponds to 92–106 (ELAEKIGYPNEIIRS). Residues 107 to 127 (CFFFAFTVGVSVITEIPFSYY) traverse the membrane as a helical segment. The Cytoplasmic portion of the chain corresponds to 128 to 150 (YQFILEEKFGYNRMTRTLFIKDK). Residues 151–171 (IISTLLMIGFGLPILSLAIFI) form a helical membrane-spanning segment. Residues 172-178 (INWSGPQ) lie on the Lumenal side of the membrane. The helical transmembrane segment at 179-199 (LWFYCWLLLVAITLLSITIYP) threads the bilayer. Topologically, residues 200-294 (TFIQPLFNKF…GHYKMSHTLK (95 aa)) are cytoplasmic. Histidine 282 is a binding site for Zn(2+). The active site involves glutamate 283. Histidine 286 provides a ligand contact to Zn(2+). A helical membrane pass occupies residues 295–315 (QMLLVQVHLVTLLYAFSLLIN). At 316-333 (DDQLYQQFGFVSSKDSVL) the chain is on the lumenal side. The chain crosses the membrane as a helical span at residues 334 to 354 (VGLTLFMFLYSPIDRIFSLLI). Over 355–426 (NIFSRKYEFQ…KVALYKLKNK (72 aa)) the chain is Cytoplasmic. Glutamate 362 contacts Zn(2+).

The protein belongs to the peptidase M48B family. Zn(2+) serves as cofactor.

It is found in the endoplasmic reticulum membrane. It catalyses the reaction Hydrolyzes the peptide bond -P2-(S-farnesyl or geranylgeranyl)C-P1'-P2'-P3'-COOH where P1' and P2' are amino acids with aliphatic side chains and P3' is any C-terminal residue.. In terms of biological role, proteolytically removes the C-terminal three residues of farnesylated proteins. The polypeptide is CAAX prenyl protease 1 homolog (zmpste24) (Dictyostelium discoideum (Social amoeba)).